A 157-amino-acid chain; its full sequence is Glucosamine 6-phosphate N-acetyltransferase 1 (157 aa).

The N-acetyltransferase domain maps to 9–157 (ISFRPLDIDD…SIYLPTPPKL (149 aa)). Substrate is bound by residues T31, 78–81 (KFIR), and 90–92 (EDI). 100 to 105 (GKNLGL) serves as a coordination point for acetyl-CoA. 121-122 (YK) contacts substrate. 135–137 (YEK) contacts acetyl-CoA.

This sequence belongs to the acetyltransferase family. GNA1 subfamily.

It catalyses the reaction D-glucosamine 6-phosphate + acetyl-CoA = N-acetyl-D-glucosamine 6-phosphate + CoA + H(+). Its pathway is nucleotide-sugar biosynthesis; UDP-N-acetyl-alpha-D-glucosamine biosynthesis; N-acetyl-alpha-D-glucosamine 1-phosphate from alpha-D-glucosamine 6-phosphate (route I): step 1/2. This is Glucosamine 6-phosphate N-acetyltransferase 1 (gna1) from Dictyostelium discoideum (Social amoeba).